The chain runs to 1032 residues: uncharacterized protein (1032 aa).

Disordered regions lie at residues 54–80 (NNNN…NNNN), 391–451 (QLQI…QTHL), and 884–934 (INNE…SKVK). Over residues 884 to 907 (INNENNNENNNNYNGNINSNNNNN) the composition is skewed to low complexity.

This is an uncharacterized protein from Dictyostelium discoideum (Social amoeba).